Reading from the N-terminus, the 308-residue chain is GTP-binding protein RAD (308 aa).

A compositionally biased stretch (gly residues) spans Met-1 to Ala-15. The segment at Met-1–Gly-86 is disordered. Arg-24 carries the post-translational modification Omega-N-methylarginine. Ser-26 carries the phosphoserine modification. The span at Ala-57–Ser-82 shows a compositional bias: low complexity. GTP-binding positions include Gly-98–Ser-105 and Asn-203–Asp-206. A calmodulin-binding region spans residues Ala-278–Ala-297.

Belongs to the small GTPase superfamily. RGK family. As to quaternary structure, interacts with Calmodulin preferentially in the inactive, GDP-bound form. Interacts with CAMK2D. Interacts with CACNB2; interaction may be involved in beta-adrenergic regulation of heart rate and contractile force. Interaction with CACNB2 regulates the trafficking of CACNA1C to the cell membrane. Phosphorylation at Ser-26, Ser-39, Ser-273 and Ser-301 may be involved in regulating inhibition of voltage-gated L-type Ca(2+) channels.

It localises to the cell membrane. In terms of biological role, may regulate basal voltage-dependent L-type Ca(2+) currents and be required for beta-adrenergic augmentation of Ca(2+) influx in cardiomyocytes, thereby regulating increases in heart rate and contractile force. May play an important role in cardiac antiarrhythmia via the strong suppression of voltage-dependent L-type Ca(2+) currents. Regulates voltage-gated L-type calcium channel subunit alpha-1C trafficking to the cell membrane. Inhibits cardiac hypertrophy through the calmodulin-dependent kinase II (CaMKII) pathway. Inhibits phosphorylation and activation of CAMK2D. The chain is GTP-binding protein RAD (Rrad) from Mus musculus (Mouse).